The primary structure comprises 28 residues: Ranatuerin-2LT (28 aa).

Residues Cys23 and Cys28 are joined by a disulfide bond.

In terms of tissue distribution, expressed by the skin glands.

It is found in the secreted. Its function is as follows. Has antibacterial activity. This Rana latastei (Italian agile frog) protein is Ranatuerin-2LT.